A 199-amino-acid chain; its full sequence is Probable GTP-binding protein EngB (199 aa).

The region spanning E24 to Y197 is the EngB-type G domain. GTP-binding positions include G32–S39, G59–H63, D77–G80, T144–D147, and F176–S178. 2 residues coordinate Mg(2+): S39 and T61.

The protein belongs to the TRAFAC class TrmE-Era-EngA-EngB-Septin-like GTPase superfamily. EngB GTPase family. Mg(2+) is required as a cofactor.

Necessary for normal cell division and for the maintenance of normal septation. This Ruthia magnifica subsp. Calyptogena magnifica protein is Probable GTP-binding protein EngB.